A 465-amino-acid polypeptide reads, in one-letter code: Ras GTPase-activating protein-binding protein 1 (465 aa).

An NTF2 domain is found at 11–133 (VGREFVRQYY…FYVHNDIFRY (123 aa)). Glycyl lysine isopeptide (Lys-Gly) (interchain with G-Cter in ubiquitin) cross-links involve residues K36, K50, K59, K64, K76, and K123. Residues 142 to 224 (VTEPQEESEE…EAALEEAAPD (83 aa)) form an acidic disordered region region. At T143 the chain carries Phosphothreonine. Residues 144–330 (EPQEESEEEV…GEPGDVEPRR (187 aa)) are disordered. Acidic residues-rich tracts occupy residues 145–157 (PQEE…EEPE) and 184–205 (EHLE…EPEP). Phosphoserine is present on S149. A phosphoserine mark is found at S231, S248, and S251. The span at 248-257 (SWASVTSKNL) shows a compositional bias: polar residues. Composition is skewed to basic and acidic residues over residues 295-305 (PQRDQRVREQR) and 316-330 (PIRE…EPRR). The 76-residue stretch at 338 to 413 (HQLFIGNLPH…VRLNVEEKKT (76 aa)) folds into the RRM domain. Residues K351 and K355 each participate in a glycyl lysine isopeptide (Lys-Gly) (interchain with G-Cter in ubiquitin) cross-link. S371 carries the phosphoserine modification. K374 participates in a covalent cross-link: Glycyl lysine isopeptide (Lys-Gly) (interchain with G-Cter in ubiquitin). Residue K374 is modified to N6-acetyllysine; alternate. K374 is covalently cross-linked (Glycyl lysine isopeptide (Lys-Gly) (interchain with G-Cter in SUMO2); alternate). Residue K391 forms a Glycyl lysine isopeptide (Lys-Gly) (interchain with G-Cter in ubiquitin); alternate linkage. Positions 408 to 464 (VEEKKTRAAREGDRRDNRLRGPGGPRGGPSGGMRGPPRGGMVQKPGFGVGRGITTPR) are RG-rich region. The span at 411 to 426 (KKTRAAREGDRRDNRL) shows a compositional bias: basic and acidic residues. The disordered stretch occupies residues 411–465 (KKTRAAREGDRRDNRLRGPGGPRGGPSGGMRGPPRGGMVQKPGFGVGRGITTPRQ). R427 carries the asymmetric dimethylarginine modification. A compositionally biased stretch (gly residues) spans 428–445 (GPGGPRGGPSGGMRGPPR). R433 carries the asymmetric dimethylarginine; alternate modification. 4 positions are modified to omega-N-methylarginine; alternate: R433, R445, R458, and R464. R458 carries the dimethylated arginine; alternate modification.

In terms of assembly, homodimer and oligomer. Component of a TAU mRNP complex, at least composed of IGF2BP1, ELAVL4 and G3BP1. Binds to the SH3 domain of Ras GTPase-activating protein (RASA1) in proliferating cells. No interaction in quiescent cells. Interacts (via NTF2 domain) with USP10; inhibiting stress granule formation by lowering G3BP1 valence. Interacts (via NTF2 domain) with CAPRIN1; promoting stress granule formation by lowering the saturation-concentration of G3BP1. Interacts (via NTF2 domain) with UBAP2L; promoting stress granule formation. Associates (via RG-rich region) with 40S ribosome subunits. Interacts with RPTOR and SPAG5; this complex is increased by oxidative stress. Interacts with ATXN2L. Interacts with STYXL1. Interacts with CGAS (via N-terminus); this interaction promotes the DNA-binding and activation of CGAS. Interacts (via C-terminus) with RIGI. Interacts with PABPC1. Interacts with QKI (isoforms QKI6 and QKI7); directing N(7)-methylguanine-containing mRNAs to stress granules. Mg(2+) is required as a cofactor. Phosphorylation of the acidic disordered region regulates stress granule assembly. RASA1-dependent phosphorylation of Ser-149 induces a conformational change that prevents self-association. Dephosphorylation after HRAS activation is required for stress granule assembly. Ser-149 phosphorylation induces partial nuclear localization. In terms of processing, arg-435 is dimethylated, probably to asymmetric dimethylarginine. Post-translationally, ubiquitinated by TRIM21 via 'Lys-63'-linked polyubiquitination in the NTF2 domain in response to heat shock, leading to stress granule disassembly: ubiquitination promotes interaction with the FAF2 adapter, followed by interaction with VCP, which extracts G3BP1 from stress granules, leading to stress granule disassembly. In case of prolonged stress, ubiquitination by TRIM21 leads to autophagy-dependent degradation of G3BP1 via recruitment of ubiquitinated G3BP1 by SQSTM1 and/or CALCOCO2 to autophagosomes. In terms of tissue distribution, ubiquitous.

The protein resides in the cytoplasm. It is found in the cytosol. Its subcellular location is the perikaryon. The protein localises to the stress granule. It localises to the nucleus. The catalysed reaction is ATP + H2O = ADP + phosphate + H(+). Under physiological conditions, G3BP1 adopts a compact state that is stabilized by intramolecular interactions between the RG-rich and the acidic regions that inhibit phase separation. Upon stress, polysomes disassemble and mRNAs are released in an unfolded protein-free state. Binding of unfolded mRNA to G3BP1 outcompetes the intramolecular interactions and RNA-bound G3BP1 adopts an expanded conformation in which the RG-rich region becomes exposed to engage in protein-protein and protein-RNA interactions, allowing physical cross-linking of RNA molecules to form protein-RNA condensates, leading to liquid-liquid phase separation (LLPS). Protein involved in various processes, such as stress granule formation and innate immunity. Plays an essential role in stress granule formation. Stress granules are membraneless compartments that store mRNAs and proteins, such as stalled translation pre-initiation complexes, in response to stress. Promotes formation of stress granules phase-separated membraneless compartment by undergoing liquid-liquid phase separation (LLPS) upon unfolded RNA-binding: functions as a molecular switch that triggers RNA-dependent LLPS in response to a rise in intracellular free RNA concentrations. Also acts as an ATP- and magnesium-dependent helicase: unwinds DNA/DNA, RNA/DNA, and RNA/RNA substrates with comparable efficiency. Acts unidirectionally by moving in the 5' to 3' direction along the bound single-stranded DNA. Unwinds preferentially partial DNA and RNA duplexes having a 17 bp annealed portion and either a hanging 3' tail or hanging tails at both 5'- and 3'-ends. Plays an essential role in innate immunity by promoting CGAS and RIGI activity. Participates in the DNA-triggered cGAS/STING pathway by promoting the DNA binding and activation of CGAS. Triggers the condensation of cGAS, a process probably linked to the formation of membrane-less organelles. Also enhances RIGI-induced type I interferon production probably by helping RIGI at sensing pathogenic RNA. May also act as a phosphorylation-dependent sequence-specific endoribonuclease in vitro: Cleaves exclusively between cytosine and adenine and cleaves MYC mRNA preferentially at the 3'-UTR. This is Ras GTPase-activating protein-binding protein 1 (G3bp1) from Mus musculus (Mouse).